The following is a 387-amino-acid chain: (S)-8-oxocitronellyl enol synthase (387 aa).

NADP(+) contacts are provided by residues 36–38 (TGI), 64–65 (RR), 82–83 (DI), 106–107 (SW), and Gln140. Active-site residues include Lys144 and Tyr177. Substrate-binding residues include Lys144 and Tyr177. NADP(+)-binding positions include Tyr177 and 211–213 (SMM).

It belongs to the short-chain dehydrogenases/reductases (SDR) family. Highly divergent. Expressed in leaves.

It catalyses the reaction (S)-8-oxocitronellyl enol + NADP(+) = (6E)-8-oxogeranial + NADPH + H(+). The catalysed reaction is (S)-8-oxocitronellyl enol + NAD(+) = (6E)-8-oxogeranial + NADH + H(+). The enzyme catalyses (R)-8-oxocitronellyl enol + NADP(+) = (6E)-8-oxogeranial + NADPH + H(+). Iridoid synthase that catalyzes the first step in generation of the iridoid ring scaffold using the linear monoterpene (6E)-8-oxogeranial as substrate. Reduces 8-oxogeranial, generating an unstable product that is subsequently cyclized into several possible products, either non-enzymically or by dedicated cyclases. Iridoids comprise a large family of distinctive bicyclic monoterpenes that possess a wide range of pharmacological activities, including anticancer, anti-inflammatory, antifungal and antibacterial activities. The polypeptide is (S)-8-oxocitronellyl enol synthase (Antirrhinum majus (Garden snapdragon)).